Here is a 116-residue protein sequence, read N- to C-terminus: Large ribosomal subunit protein bL20 (116 aa).

It belongs to the bacterial ribosomal protein bL20 family.

Its function is as follows. Binds directly to 23S ribosomal RNA and is necessary for the in vitro assembly process of the 50S ribosomal subunit. It is not involved in the protein synthesizing functions of that subunit. The sequence is that of Large ribosomal subunit protein bL20 from Bacteroides fragilis (strain ATCC 25285 / DSM 2151 / CCUG 4856 / JCM 11019 / LMG 10263 / NCTC 9343 / Onslow / VPI 2553 / EN-2).